The primary structure comprises 481 residues: tRNA-guanine(15) transglycosylase (481 aa).

Aspartate 87 acts as the Nucleophile in catalysis. Substrate-binding residues include aspartate 122 and alanine 191. 3 residues coordinate Zn(2+): cysteine 273, cysteine 275, and cysteine 278.

Belongs to the archaeosine tRNA-ribosyltransferase family. Zn(2+) is required as a cofactor.

It catalyses the reaction guanosine(15) in tRNA + 7-cyano-7-deazaguanine = 7-cyano-7-carbaguanosine(15) in tRNA + guanine. Its pathway is tRNA modification; archaeosine-tRNA biosynthesis. Functionally, exchanges the guanine residue with 7-cyano-7-deazaguanine (preQ0) at position 15 in the dihydrouridine loop (D-loop) of archaeal tRNAs. This chain is tRNA-guanine(15) transglycosylase, found in Archaeoglobus fulgidus (strain ATCC 49558 / DSM 4304 / JCM 9628 / NBRC 100126 / VC-16).